We begin with the raw amino-acid sequence, 189 residues long: UPF0340 protein EF_1967 (189 aa).

The protein belongs to the UPF0340 family.

This chain is UPF0340 protein EF_1967, found in Enterococcus faecalis (strain ATCC 700802 / V583).